Reading from the N-terminus, the 629-residue chain is tRNA uridine 5-carboxymethylaminomethyl modification enzyme MnmG (629 aa).

FAD is bound by residues 13 to 18, V125, and S180; that span reads GGGHAG. 273–287 is an NAD(+) binding site; the sequence is GPRYCPSIEDKVMRF. An FAD-binding site is contributed by Q370.

The protein belongs to the MnmG family. As to quaternary structure, homodimer. Heterotetramer of two MnmE and two MnmG subunits. Requires FAD as cofactor.

The protein localises to the cytoplasm. Its function is as follows. NAD-binding protein involved in the addition of a carboxymethylaminomethyl (cmnm) group at the wobble position (U34) of certain tRNAs, forming tRNA-cmnm(5)s(2)U34. The protein is tRNA uridine 5-carboxymethylaminomethyl modification enzyme MnmG of Shigella sonnei (strain Ss046).